The sequence spans 268 residues: Cell division cycle-associated protein 3 (268 aa).

Disordered regions lie at residues 1–232 (MGSA…SELK) and 247–268 (GRAW…LVES). Residues serine 29 and serine 31 each carry the phosphoserine modification. At threonine 37 the chain carries Phosphothreonine. A phosphoserine mark is found at serine 44, serine 64, and serine 68. Residues 56-66 (EGLKHAQDSDP) are compositionally biased toward basic and acidic residues. Threonine 76 carries the post-translational modification Phosphothreonine. Phosphoserine occurs at positions 87 and 94. The segment at 91 to 120 (KQLSEVFETEDSKSNLPPEPVLPPEAPLSS) is F-box-like. A compositionally biased stretch (pro residues) spans 107-116 (PPEPVLPPEA). Over residues 117–126 (PLSSELDLPL) the composition is skewed to low complexity. Composition is skewed to polar residues over residues 128–149 (TQLS…SKQV), 158–169 (PTETPVASQSSD), and 178–194 (PRSS…NSSK). Phosphoserine is present on serine 199. Threonine 202 carries the post-translational modification Phosphothreonine. Residues 205-215 (QDDNSPGTLTL) are compositionally biased toward polar residues. Serine 209 carries the post-translational modification Phosphoserine. Threonine 212 carries the post-translational modification Phosphothreonine. The KEN box signature appears at 258–260 (KEN).

Interacts with SKP1. Part of a SCF (SKP1-cullin-F-box) protein ligase complex. Ubiquitinated and degraded by the APC/C-Cdh1 complex.

It localises to the cytoplasm. The protein localises to the cytosol. It functions in the pathway protein modification; protein ubiquitination. In terms of biological role, F-box-like protein which is required for entry into mitosis. Acts by participating in E3 ligase complexes that mediate the ubiquitination and degradation of WEE1 kinase at G2/M phase. This chain is Cell division cycle-associated protein 3 (CDCA3), found in Homo sapiens (Human).